An 82-amino-acid chain; its full sequence is Turripeptide IX-23 (82 aa).

Positions Met-1–Gly-23 are cleaved as a signal peptide. Residues Arg-24–Pro-50 constitute a propeptide that is removed on maturation. 3 disulfide bridges follow: Cys-53–Cys-68, Cys-58–Cys-72, and Cys-64–Cys-79.

It belongs to the Pg turripeptide superfamily. Expressed by the venom duct.

The protein resides in the secreted. The chain is Turripeptide IX-23 from Gemmula speciosa (Splendid gem-turris).